A 263-amino-acid chain; its full sequence is Hydroxyethylthiazole kinase (263 aa).

Met41 provides a ligand contact to substrate. Arg117 and Ser163 together coordinate ATP. Gly190 contacts substrate.

The protein belongs to the Thz kinase family. Mg(2+) serves as cofactor.

The catalysed reaction is 5-(2-hydroxyethyl)-4-methylthiazole + ATP = 4-methyl-5-(2-phosphooxyethyl)-thiazole + ADP + H(+). Its pathway is cofactor biosynthesis; thiamine diphosphate biosynthesis; 4-methyl-5-(2-phosphoethyl)-thiazole from 5-(2-hydroxyethyl)-4-methylthiazole: step 1/1. Catalyzes the phosphorylation of the hydroxyl group of 4-methyl-5-beta-hydroxyethylthiazole (THZ). This is Hydroxyethylthiazole kinase from Lactiplantibacillus plantarum (strain ATCC BAA-793 / NCIMB 8826 / WCFS1) (Lactobacillus plantarum).